An 84-amino-acid polypeptide reads, in one-letter code: Beta-defensin 119 (84 aa).

Residues 1-21 (MKLLYLFLAILLAIEEPVISG) form the signal peptide. Intrachain disulfides connect C28–C55, C35–C49, and C39–C56.

It belongs to the beta-defensin family. Abundant expression in the male reproductive tract only. Abundant expressed in testis and the caput region of epididymis, but low in the corpus region.

It is found in the secreted. Functionally, has antibacterial activity. The polypeptide is Beta-defensin 119 (DEFB119) (Homo sapiens (Human)).